The following is a 521-amino-acid chain: Anaerobic nitric oxide reductase flavorubredoxin (521 aa).

The zinc metallo-hydrolase stretch occupies residues 30–210 (HKGTSYNSYL…PFSPLVTAKI (181 aa)). 6 residues coordinate Fe cation: histidine 79, glutamate 81, aspartate 83, histidine 147, aspartate 166, and histidine 227. Residues 254-393 (ITLFYDSMSN…LCREHGRQLA (140 aa)) enclose the Flavodoxin-like domain. FMN contacts are provided by residues 260-264 (SMSNN) and 342-369 (AFGS…DISI). Positions 464 to 515 (DQPMLCTVCQWIYDPALGEPDQLVAPGTPWARVPDSFLCPGCGIGKEVFEPC) constitute a Rubredoxin-like domain. Positions 469, 472, 502, and 505 each coordinate Fe cation.

It in the N-terminal section; belongs to the zinc metallo-hydrolase group 3 family. As to quaternary structure, homotetramer. Requires Fe cation as cofactor. The cofactor is FMN.

It localises to the cytoplasm. The protein operates within nitrogen metabolism; nitric oxide reduction. Its function is as follows. Anaerobic nitric oxide reductase; uses NADH to detoxify nitric oxide (NO), protecting several 4Fe-4S NO-sensitive enzymes. Has at least 2 reductase partners, only one of which (NorW, flavorubredoxin reductase) has been identified. NO probably binds to the di-iron center; electrons enter from the NorW at rubredoxin and are transferred sequentially to the FMN center and the di-iron center. Also able to function as an aerobic oxygen reductase. This is Anaerobic nitric oxide reductase flavorubredoxin from Aeromonas salmonicida (strain A449).